We begin with the raw amino-acid sequence, 310 residues long: Glutaminase 1 (310 aa).

Ser-66, Asn-117, Glu-161, Asn-168, Tyr-192, Tyr-244, and Val-262 together coordinate substrate. At Lys-294 the chain carries N6-acetyllysine.

Belongs to the glutaminase family. In terms of assembly, homotetramer.

The enzyme catalyses L-glutamine + H2O = L-glutamate + NH4(+). The sequence is that of Glutaminase 1 from Escherichia coli O157:H7.